Consider the following 264-residue polypeptide: Thymidylate synthase (264 aa).

Arg21 lines the dUMP pocket. His51 is a (6R)-5,10-methylene-5,6,7,8-tetrahydrofolate binding site. 126-127 (RR) contacts dUMP. The active-site Nucleophile is Cys146. DUMP contacts are provided by residues 166 to 169 (RSCD), Asn177, and 207 to 209 (HLY). Asp169 is a binding site for (6R)-5,10-methylene-5,6,7,8-tetrahydrofolate. Ala263 serves as a coordination point for (6R)-5,10-methylene-5,6,7,8-tetrahydrofolate.

This sequence belongs to the thymidylate synthase family. Bacterial-type ThyA subfamily. In terms of assembly, homodimer.

Its subcellular location is the cytoplasm. It catalyses the reaction dUMP + (6R)-5,10-methylene-5,6,7,8-tetrahydrofolate = 7,8-dihydrofolate + dTMP. It participates in pyrimidine metabolism; dTTP biosynthesis. Its function is as follows. Catalyzes the reductive methylation of 2'-deoxyuridine-5'-monophosphate (dUMP) to 2'-deoxythymidine-5'-monophosphate (dTMP) while utilizing 5,10-methylenetetrahydrofolate (mTHF) as the methyl donor and reductant in the reaction, yielding dihydrofolate (DHF) as a by-product. This enzymatic reaction provides an intracellular de novo source of dTMP, an essential precursor for DNA biosynthesis. The sequence is that of Thymidylate synthase from Salmonella paratyphi C (strain RKS4594).